We begin with the raw amino-acid sequence, 364 residues long: G-protein coupled receptor 4 (364 aa).

Residues 1 to 8 (MCNVSQDS) are Extracellular-facing. Asn3 carries an N-linked (GlcNAc...) asparagine glycan. A helical membrane pass occupies residues 9–45 (CNIDSRLDSLFPPTLYIFVMVIGFPTNCLSLWAAFVQ). 2 disulfides stabilise this stretch: Cys9-Cys258 and Cys90-Cys168. The Cytoplasmic portion of the chain corresponds to 46–49 (VRQK). A helical membrane pass occupies residues 50 to 80 (NELGVYLLNLSISDLLYIATLPPWVNYFLHQ). Residues 81–85 (DNWIH) are Extracellular-facing. A helical membrane pass occupies residues 86–121 (GPESCKLFGFILYTNIYISIGFLSCISVDRYLAVAH). At 122 to 129 (PLKFAKVR) the chain is on the cytoplasmic side. The helical transmembrane segment at 130–156 (RVKTAAVVSAVVWAIEIGANSAPLFHN) threads the bilayer. Residues 157–172 (ELFEDRFNHTFCFEKY) lie on the Extracellular side of the membrane. Residues 157–172 (ELFEDRFNHTFCFEKY) form an extracellular loop 2 (ECL2) region. N-linked (GlcNAc...) asparagine glycosylation occurs at Asn164. The chain crosses the membrane as a helical span at residues 173-210 (PMEDWVAQMNLYRVFVGFLFPWVLMLFCYQGILRAVKT). Topologically, residues 211 to 214 (NVST) are cytoplasmic. Residues 215 to 250 (EREEKAKIKRLALSLIAILLFCFAPYHLILLSRSVV) traverse the membrane as a helical segment. Topologically, residues 251–260 (YLGQPCDCTF) are extracellular. The helical transmembrane segment at 261–289 (EENIFTAYHVSLALTSLNCVADPILYCLA) threads the bilayer. Residues 290 to 364 (NEGARSEVTR…RVRRRRDCKC (75 aa)) lie on the Cytoplasmic side of the membrane.

The protein belongs to the G-protein coupled receptor 1 family.

The protein localises to the cell membrane. Activated by a network of residues that connects an extracellular-facing cavity to Glu-145, a conserved charged residue buried in the transmembrane core of the receptor. Protonation likely drives conformational changes in extracellular loop 2 (ECL2), which stabilizes movement of transmembrane 3 (TM3) and a series of rearrangements that connect the extracellular-facing cavity to Glu-145, a residue only conserved in proton-sensing G-protein coupled receptors. Proton-sensing G-protein coupled receptor activated by extracellular pH, which is required to monitor pH changes and generate adaptive reactions. Ligand binding causes a conformation change that triggers signaling via guanine nucleotide-binding proteins (G proteins) and modulates the activity of downstream effectors, such as adenylate cyclase. The protein is G-protein coupled receptor 4 of Callorhinchus milii (Ghost shark).